The following is a 234-amino-acid chain: Enterobactin synthase component D (234 aa).

Mg(2+) is bound by residues Asp107, Glu109, and Glu152.

It belongs to the P-Pant transferase superfamily. EntD family. EntB, EntD, EntE, and EntF form a multienzyme complex called enterobactin synthase. The cofactor is Mg(2+).

It localises to the membrane. It catalyses the reaction apo-[aryl-carrier protein] + CoA = holo-[aryl-carrier protein] + adenosine 3',5'-bisphosphate + H(+). It carries out the reaction apo-[peptidyl-carrier protein] + CoA = holo-[peptidyl-carrier protein] + adenosine 3',5'-bisphosphate + H(+). The protein operates within siderophore biosynthesis; enterobactin biosynthesis. Its function is as follows. Involved in the biosynthesis of the siderophore enterobactin (enterochelin), which is a macrocyclic trimeric lactone of N-(2,3-dihydroxybenzoyl)-serine. The serine trilactone serves as a scaffolding for the three catechol functionalities that provide hexadentate coordination for the tightly ligated iron(2+) atoms. Plays an essential role in the assembly of the enterobactin by catalyzing the transfer of the 4'-phosphopantetheine (Ppant) moiety from coenzyme A to the apo-domains of both EntB (ArCP domain) and EntF (PCP domain) to yield their holo-forms which make them competent for the activation of 2,3-dihydroxybenzoate (DHB) and L-serine, respectively. The protein is Enterobactin synthase component D of Salmonella typhimurium (strain LT2 / SGSC1412 / ATCC 700720).